We begin with the raw amino-acid sequence, 509 residues long: ATP synthase subunit alpha (509 aa).

An ATP-binding site is contributed by 169 to 176 (GDRQTGKT).

This sequence belongs to the ATPase alpha/beta chains family. F-type ATPases have 2 components, CF(1) - the catalytic core - and CF(0) - the membrane proton channel. CF(1) has five subunits: alpha(3), beta(3), gamma(1), delta(1), epsilon(1). CF(0) has three main subunits: a(1), b(2) and c(9-12). The alpha and beta chains form an alternating ring which encloses part of the gamma chain. CF(1) is attached to CF(0) by a central stalk formed by the gamma and epsilon chains, while a peripheral stalk is formed by the delta and b chains.

It localises to the cell inner membrane. It catalyses the reaction ATP + H2O + 4 H(+)(in) = ADP + phosphate + 5 H(+)(out). Functionally, produces ATP from ADP in the presence of a proton gradient across the membrane. The alpha chain is a regulatory subunit. This chain is ATP synthase subunit alpha, found in Brucella anthropi (strain ATCC 49188 / DSM 6882 / CCUG 24695 / JCM 21032 / LMG 3331 / NBRC 15819 / NCTC 12168 / Alc 37) (Ochrobactrum anthropi).